Consider the following 296-residue polypeptide: Tuberculosinyl adenosine transferase (296 aa).

Belongs to the diterpene synthase family. In terms of assembly, homodimer. The cofactor is Mg(2+).

The enzyme catalyses tuberculosinyl diphosphate + adenosine + H(+) = 1-tuberculosinyladenosine + diphosphate. It catalyses the reaction tuberculosinyl diphosphate + H2O = tuberculosinol + diphosphate. The catalysed reaction is tuberculosinyl diphosphate + H2O = (13R)-edaxadiene + diphosphate. It carries out the reaction tuberculosinyl diphosphate + H2O = (13S)-edaxadiene + diphosphate. Its function is as follows. Tuberculosinyl transferase that catalyzes the condensation of adenosine and tuberculosinyl diphosphate (TbPP) to generate 1-tuberculosinyladenosine (1-TbAd), which acts as an antiacid that directly protects M.tuberculosis from acid pH and physically remodels M.tuberculosis phagolysosomes. In addition, acts as a phosphatase that catalyzes the diphosphate-removal from TbPP to produce both tuberculosinol (TOH) and isotuberculosinol (iso-TOH). The sequence is that of Tuberculosinyl adenosine transferase from Mycobacterium tuberculosis (strain CDC 1551 / Oshkosh).